Consider the following 428-residue polypeptide: MKLITNKQGLVGNITVPGDKSMSHRSIMFGAIAEGKTVIRHFLRADDCLGTIKAFKALGVKIEETDEEIIVHGTGFDGLKQADGPLDIGNSGTTIRLMMGILAGRDFDTVILGDESIAKRPMNRVMLPLQEMGAKMHGKDGSEFAPITILGKQSLKRVEYHMPVASAQVKSAIIFAALQADGETIIHEKEKTRDHTEHMIRQFGGEIEMDGLTIRVKGGQKFIGQEMTVPGDVSSAAFFIVAGLIMPNSEIELTHVGLNPTRTGIFDVVEQMGGSLVVKDSSRSTGKLAGTVVVKSSELKGTEIGGDIIPRLIDEIPVIALLATQAEGTTIIKDAAELKVKETNRIDAVATELNKMGADITPTEDGLIIRGKTPLHAANVTSYGDHRIGMMLQIAALLVEDGDVELDRAEAVSVSYPTFFEDIRSLLK.

Positions 20, 21, and 25 each coordinate 3-phosphoshikimate. Lys-20 lines the phosphoenolpyruvate pocket. Gly-92 and Arg-120 together coordinate phosphoenolpyruvate. 4 residues coordinate 3-phosphoshikimate: Ser-166, Gln-168, Asp-314, and Lys-341. Phosphoenolpyruvate is bound at residue Gln-168. Asp-314 (proton acceptor) is an active-site residue. Residues Arg-345 and Arg-387 each coordinate phosphoenolpyruvate.

Belongs to the EPSP synthase family. As to quaternary structure, monomer.

The protein resides in the cytoplasm. The catalysed reaction is 3-phosphoshikimate + phosphoenolpyruvate = 5-O-(1-carboxyvinyl)-3-phosphoshikimate + phosphate. The protein operates within metabolic intermediate biosynthesis; chorismate biosynthesis; chorismate from D-erythrose 4-phosphate and phosphoenolpyruvate: step 6/7. Its function is as follows. Catalyzes the transfer of the enolpyruvyl moiety of phosphoenolpyruvate (PEP) to the 5-hydroxyl of shikimate-3-phosphate (S3P) to produce enolpyruvyl shikimate-3-phosphate and inorganic phosphate. This Listeria welshimeri serovar 6b (strain ATCC 35897 / DSM 20650 / CCUG 15529 / CIP 8149 / NCTC 11857 / SLCC 5334 / V8) protein is 3-phosphoshikimate 1-carboxyvinyltransferase.